Consider the following 494-residue polypeptide: Glycerol kinase 1 (494 aa).

Threonine 12 serves as a coordination point for ADP. ATP-binding residues include threonine 12, threonine 13, and serine 14. Threonine 12 contacts sn-glycerol 3-phosphate. Arginine 16 contacts ADP. 4 residues coordinate sn-glycerol 3-phosphate: arginine 82, glutamate 83, tyrosine 134, and aspartate 243. Glycerol is bound by residues arginine 82, glutamate 83, tyrosine 134, aspartate 243, and glutamine 244. The ADP site is built by threonine 265 and glycine 308. Residues threonine 265, glycine 308, glutamine 312, and glycine 408 each coordinate ATP. Residues glycine 408 and asparagine 412 each contribute to the ADP site.

Belongs to the FGGY kinase family.

The catalysed reaction is glycerol + ATP = sn-glycerol 3-phosphate + ADP + H(+). It participates in polyol metabolism; glycerol degradation via glycerol kinase pathway; sn-glycerol 3-phosphate from glycerol: step 1/1. With respect to regulation, inhibited by fructose 1,6-bisphosphate (FBP). Key enzyme in the regulation of glycerol uptake and metabolism. Catalyzes the phosphorylation of glycerol to yield sn-glycerol 3-phosphate. This chain is Glycerol kinase 1, found in Pseudomonas aeruginosa (strain ATCC 15692 / DSM 22644 / CIP 104116 / JCM 14847 / LMG 12228 / 1C / PRS 101 / PAO1).